The sequence spans 184 residues: Endothelial cell-specific molecule 1 (184 aa).

An N-terminal signal peptide occupies residues M1–A19. One can recognise an IGFBP N-terminal domain in the interval Y24–C102. 6 cysteine pairs are disulfide-bonded: C28–C51, C32–C53, C37–C54, C43–C57, C65–C83, and C77–C99. O-linked (Xyl...) (chondroitin sulfate) serine glycosylation occurs at S156.

As to quaternary structure, monomer. Post-translationally, may contain intrachain disulfide bonds. O-glycosylated; contains chondroitin sulfate and dermatan sulfate. As to expression, expressed in lung, on the vascular capillary network within alveolar walls, and also at lower level in kidney.

Its subcellular location is the secreted. In terms of biological role, involved in angiogenesis; promotes angiogenic sprouting. May have potent implications in lung endothelial cell-leukocyte interactions. This Homo sapiens (Human) protein is Endothelial cell-specific molecule 1 (ESM1).